The primary structure comprises 724 residues: MDGNGIGSTGKCPVMHGGNTAMGTSNTDWWPNALNLDILHQHDSKTNPMGPGFDYRRALQGLDVTALKRDLHALMTDSQDWWPADWGHYGGLMIRMAWHAAGSYRTADGRGGGGTGNQRFAPLNSWPDNVNLDKARRLLWPVKKKYGNAISWADLIILAGTVAYESMGLKTFGFAFGRADIWHPEKDTYWGAEKEWLAPSDSRYGDVADPASMENPLAAVQMGLIYVNPQGVNGEPDPLRTALHVRETFARMAMNDEETVALTAGGHTVGKCHGNGDAALIGPDPEAADVVEQGLGWMNHSTRGVGRNTVTSGIEGAWTTHPTRWDNGYFDLLFGYEWELRKSPAGAWQWEPIDIREEDKPVDVEDPSIRYNPIMTDADMAMKMDPIYRPIAERFHRDPAYFSDVFARAWFKLTHRDMGPKARYLGPDVPQEDLIWQDPVPAGRTDYDVAAVKARIAASGLSVAELVSTAWDSARTFRGSDMRGGANGARIRLAPQKDWEGNEPARLATVLGVLEGIAAETGASVADVIVLGGNVGVEQAARAAGFEITVPFAPGRGDATDDMTDAASFDVLEPIHDAFRNWLKKDYTVSPEELMLDRAQLMGLTAHEMTVLLGGMRVLGTNHGGTKHGVLTDREGALTTDFFVNLTDMANVWKPADANLYEIRDRRTGAVKWTATRVDLVFGSNSVLRAYAEVYAQDDSREKFVQDFVAAWAKVMNADRFDIA.

The tryptophyl-tyrosyl-methioninium (Trp-Tyr) (with M-252) cross-link spans 98–226 (WHAAGSYRTA…LAAVQMGLIY (129 aa)). Catalysis depends on His99, which acts as the Proton acceptor. The tryptophyl-tyrosyl-methioninium (Tyr-Met) (with W-98) cross-link spans 226–252 (YVNPQGVNGEPDPLRTALHVRETFARM). A heme b-binding site is contributed by His267.

Belongs to the peroxidase family. Peroxidase/catalase subfamily. Homodimer or homotetramer. It depends on heme b as a cofactor. In terms of processing, formation of the three residue Trp-Tyr-Met cross-link is important for the catalase, but not the peroxidase activity of the enzyme.

It carries out the reaction H2O2 + AH2 = A + 2 H2O. The enzyme catalyses 2 H2O2 = O2 + 2 H2O. In terms of biological role, bifunctional enzyme with both catalase and broad-spectrum peroxidase activity. The chain is Catalase-peroxidase from Cereibacter sphaeroides (strain ATCC 17025 / ATH 2.4.3) (Rhodobacter sphaeroides).